Reading from the N-terminus, the 93-residue chain is HssA/B-like protein 26 (93 aa).

It belongs to the hssA/B family.

This is HssA/B-like protein 26 (hssl26) from Dictyostelium discoideum (Social amoeba).